Consider the following 640-residue polypeptide: RNA polymerase II elongation factor ELL2 (640 aa).

3 disordered regions span residues Ala172–Ser202, Lys290–Arg320, and Arg343–Leu490. Composition is skewed to polar residues over residues Thr184–Ser202 and Leu291–Gln318. Low complexity predominate over residues Ala360 to Ile372. The segment covering Ile391–Thr401 has biased composition (polar residues). The span at Met457 to Lys470 shows a compositional bias: basic residues. Residues Glu471–Leu490 are compositionally biased toward basic and acidic residues. Phosphoserine occurs at positions 503 and 580. The OCEL domain maps to Pro526 to Ala636.

Belongs to the ELL/occludin family. Component of the super elongation complex (SEC), at least composed of EAF1, EAF2, CDK9, MLLT3/AF9, AFF (AFF1 or AFF4), the P-TEFb complex and ELL (ELL, ELL2 or ELL3). Component of the little elongation complex (LEC), at least composed of ELL (ELL, ELL2 or ELL3), ZC3H8, ICE1 and ICE2. Interacts with AFF4; the interaction is direct and leads to stabilize ELL2 and prevent ELL2 ubiquitination. Interacts with EAF1 and EAF2. Post-translationally, ubiquitinated by SIAH1, leading to its degradation by the proteasome. Interaction with AFF4 stabilizes ELL2 and prevents ELL2 ubiquitination.

Its subcellular location is the nucleus. Functionally, elongation factor component of the super elongation complex (SEC), a complex required to increase the catalytic rate of RNA polymerase II transcription by suppressing transient pausing by the polymerase at multiple sites along the DNA. Component of the little elongation complex (LEC), a complex required to regulate small nuclear RNA (snRNA) gene transcription by RNA polymerase II and III. Plays a role in immunoglobulin secretion in plasma cells: directs efficient alternative mRNA processing, influencing both proximal poly(A) site choice and exon skipping, as well as immunoglobulin heavy chain (IgH) alternative processing. Probably acts by regulating histone modifications accompanying transition from membrane-specific to secretory IgH mRNA expression. This Homo sapiens (Human) protein is RNA polymerase II elongation factor ELL2 (ELL2).